Reading from the N-terminus, the 173-residue chain is Crossover junction endodeoxyribonuclease RuvC (173 aa).

Residues Asp-8, Glu-67, and Asp-139 contribute to the active site. 3 residues coordinate Mg(2+): Asp-8, Glu-67, and Asp-139.

The protein belongs to the RuvC family. Homodimer which binds Holliday junction (HJ) DNA. The HJ becomes 2-fold symmetrical on binding to RuvC with unstacked arms; it has a different conformation from HJ DNA in complex with RuvA. In the full resolvosome a probable DNA-RuvA(4)-RuvB(12)-RuvC(2) complex forms which resolves the HJ. The cofactor is Mg(2+).

It is found in the cytoplasm. It catalyses the reaction Endonucleolytic cleavage at a junction such as a reciprocal single-stranded crossover between two homologous DNA duplexes (Holliday junction).. Its function is as follows. The RuvA-RuvB-RuvC complex processes Holliday junction (HJ) DNA during genetic recombination and DNA repair. Endonuclease that resolves HJ intermediates. Cleaves cruciform DNA by making single-stranded nicks across the HJ at symmetrical positions within the homologous arms, yielding a 5'-phosphate and a 3'-hydroxyl group; requires a central core of homology in the junction. The consensus cleavage sequence is 5'-(A/T)TT(C/G)-3'. Cleavage occurs on the 3'-side of the TT dinucleotide at the point of strand exchange. HJ branch migration catalyzed by RuvA-RuvB allows RuvC to scan DNA until it finds its consensus sequence, where it cleaves and resolves the cruciform DNA. The chain is Crossover junction endodeoxyribonuclease RuvC from Shewanella frigidimarina (strain NCIMB 400).